A 276-amino-acid polypeptide reads, in one-letter code: Large ribosomal subunit protein uL2 (276 aa).

The disordered stretch occupies residues 224–265 (GTAMNPIDHPHGGGEGKNFGKHPVSPWGVQTKGKRTRSNKRT).

The protein belongs to the universal ribosomal protein uL2 family. As to quaternary structure, part of the 50S ribosomal subunit. Forms a bridge to the 30S subunit in the 70S ribosome.

Its function is as follows. One of the primary rRNA binding proteins. Required for association of the 30S and 50S subunits to form the 70S ribosome, for tRNA binding and peptide bond formation. It has been suggested to have peptidyltransferase activity; this is somewhat controversial. Makes several contacts with the 16S rRNA in the 70S ribosome. This is Large ribosomal subunit protein uL2 from Blochmanniella floridana.